A 227-amino-acid chain; its full sequence is Mitochondrial inner membrane protease ATP23 (227 aa).

His-124 contributes to the a divalent metal cation binding site. Glu-125 is an active-site residue. Residue His-128 coordinates a divalent metal cation.

This sequence belongs to the peptidase M76 family. In terms of assembly, interacts with ATP6.

The protein resides in the mitochondrion inner membrane. Has a dual role in the assembly of mitochondrial ATPase. Acts as a protease that removes the N-terminal 10 residues of mitochondrial ATPase CF(0) subunit 6 (ATP6) at the intermembrane space side. Also involved in the correct assembly of the membrane-embedded ATPase CF(0) particle, probably mediating association of ATP6 with the subunit 9 ring. The polypeptide is Mitochondrial inner membrane protease ATP23 (ATP23) (Saccharomyces cerevisiae (strain Lalvin EC1118 / Prise de mousse) (Baker's yeast)).